The sequence spans 302 residues: Nuclear egress protein 1 (302 aa).

Residues 1 to 17 (MPKSVSSHISLATSTGR) are compositionally biased toward polar residues. The segment at 1 to 22 (MPKSVSSHISLATSTGRSGPRD) is disordered. The CCCH-type zinc finger occupies 102–227 (CVSLSPFGHS…CILFKTRALH (126 aa)).

This sequence belongs to the herpesviridae NEC1 protein family. Forms a heterohexameric complex with NEC2. Interacts with capsid vertex specific component 2/CVC2; this interaction directs the capsid to the host inner nuclear membrane to initiate budding. Phosphorylated at serine residues in the N-terminus. This phosphorylation regulates the localization within the inner nuclear membrane.

Its subcellular location is the host nucleus inner membrane. Plays an essential role in virion nuclear egress, the first step of virion release from infected cell. Within the host nucleus, NEC1 interacts with the newly formed capsid through the vertexes and directs it to the inner nuclear membrane by associating with NEC2. Induces the budding of the capsid at the inner nuclear membrane as well as its envelopment into the perinuclear space. There, the NEC1/NEC2 complex promotes the fusion of the enveloped capsid with the outer nuclear membrane and the subsequent release of the viral capsid into the cytoplasm where it will reach the secondary budding sites in the host Golgi or trans-Golgi network. The sequence is that of Nuclear egress protein 1 from Homo sapiens (Human).